We begin with the raw amino-acid sequence, 354 residues long: Ferrochelatase (354 aa).

The Fe cation site is built by His-191 and Glu-271.

Belongs to the ferrochelatase family.

The protein resides in the cytoplasm. The catalysed reaction is heme b + 2 H(+) = protoporphyrin IX + Fe(2+). It participates in porphyrin-containing compound metabolism; protoheme biosynthesis; protoheme from protoporphyrin-IX: step 1/1. In terms of biological role, catalyzes the ferrous insertion into protoporphyrin IX. This is Ferrochelatase from Rickettsia bellii (strain OSU 85-389).